Here is a 284-residue protein sequence, read N- to C-terminus: Tropomyosin beta chain (284 aa).

N-acetylmethionine is present on Met-1. The stretch at 1-284 (MEAIKKKMQM…DNALNDITSL (284 aa)) forms a coiled coil. 2 stretches are compositionally biased toward basic and acidic residues: residues 22–40 (AEQAEADKKQAEDRCKQLE) and 51–66 (KGTEDEVEKYSESVKE). The segment at 22-66 (AEQAEADKKQAEDRCKQLEEEQQGLQKKLKGTEDEVEKYSESVKE) is disordered.

This sequence belongs to the tropomyosin family. Homodimer. Heterodimer of an alpha (TPM1, TPM3 or TPM4) and a beta (TPM2) chain.

The protein localises to the cytoplasm. The protein resides in the cytoskeleton. In terms of biological role, binds to actin filaments in muscle and non-muscle cells. Plays a central role, in association with the troponin complex, in the calcium dependent regulation of vertebrate striated muscle contraction. Smooth muscle contraction is regulated by interaction with caldesmon. In non-muscle cells is implicated in stabilizing cytoskeleton actin filaments. In Gallus gallus (Chicken), this protein is Tropomyosin beta chain (TPM2).